We begin with the raw amino-acid sequence, 130 residues long: Small ribosomal subunit protein uS9 (130 aa).

It belongs to the universal ribosomal protein uS9 family.

The sequence is that of Small ribosomal subunit protein uS9 from Aeromonas salmonicida (strain A449).